The following is a 472-amino-acid chain: Serine/threonine-protein kinase ULK3 (472 aa).

One can recognise a Protein kinase domain in the interval Phe14–Val270. ATP is bound by residues Leu20–Val28 and Lys44. The Proton acceptor role is filled by Asp137. Residue Ser176 is modified to Phosphoserine. An MIT 1 domain is found at Leu281 to Ile347. 2 positions are modified to phosphoserine; by autocatalysis: Ser350 and Ser384. The MIT 2 domain occupies Leu376–Ile444. Ser464 bears the Phosphoserine mark.

It belongs to the protein kinase superfamily. Ser/Thr protein kinase family. APG1/unc-51/ULK1 subfamily. In terms of assembly, interacts (via protein kinase domain) with SUFU. Autophosphorylated. Autophosphorylation is blocked by interaction with SUFU.

Its subcellular location is the cytoplasm. The enzyme catalyses L-seryl-[protein] + ATP = O-phospho-L-seryl-[protein] + ADP + H(+). It catalyses the reaction L-threonyl-[protein] + ATP = O-phospho-L-threonyl-[protein] + ADP + H(+). Serine/threonine protein kinase that acts as a regulator of Sonic hedgehog (SHH) signaling and autophagy. Acts as a negative regulator of SHH signaling in the absence of SHH ligand: interacts with SUFU, thereby inactivating the protein kinase activity and preventing phosphorylation of GLI proteins (GLI1, GLI2 and/or GLI3). Positively regulates SHH signaling in the presence of SHH: dissociates from SUFU, autophosphorylates and mediates phosphorylation of GLI2, activating it and promoting its nuclear translocation. Phosphorylates in vitro GLI2, as well as GLI1 and GLI3, although less efficiently. Also acts as a regulator of autophagy: following cellular senescence, able to induce autophagy. This Rattus norvegicus (Rat) protein is Serine/threonine-protein kinase ULK3 (Ulk3).